A 75-amino-acid chain; its full sequence is UPF0352 protein YejL (75 aa).

The protein belongs to the UPF0352 family.

This chain is UPF0352 protein YejL, found in Escherichia coli O139:H28 (strain E24377A / ETEC).